The sequence spans 357 residues: Peptide chain release factor 1 (357 aa).

The residue at position 232 (glutamine 232) is an N5-methylglutamine. Over residues 281 to 305 (DRQHNEMAADRRSQVGSGDRSERIR) the composition is skewed to basic and acidic residues. Residues 281–309 (DRQHNEMAADRRSQVGSGDRSERIRTYNF) form a disordered region.

Belongs to the prokaryotic/mitochondrial release factor family. Post-translationally, methylated by PrmC. Methylation increases the termination efficiency of RF1.

It localises to the cytoplasm. In terms of biological role, peptide chain release factor 1 directs the termination of translation in response to the peptide chain termination codons UAG and UAA. The polypeptide is Peptide chain release factor 1 (Nitratidesulfovibrio vulgaris (strain DSM 19637 / Miyazaki F) (Desulfovibrio vulgaris)).